We begin with the raw amino-acid sequence, 316 residues long: Ribose-phosphate pyrophosphokinase (316 aa).

ATP contacts are provided by residues 40 to 42 and 99 to 100; these read DGE and RQ. The Mg(2+) site is built by His-133 and Asp-174. The active site involves Lys-197. Residues Arg-199, Asp-223, and 227-231 each bind D-ribose 5-phosphate; that span reads DTAGT.

The protein belongs to the ribose-phosphate pyrophosphokinase family. Class I subfamily. Homohexamer. Requires Mg(2+) as cofactor.

The protein localises to the cytoplasm. It catalyses the reaction D-ribose 5-phosphate + ATP = 5-phospho-alpha-D-ribose 1-diphosphate + AMP + H(+). It functions in the pathway metabolic intermediate biosynthesis; 5-phospho-alpha-D-ribose 1-diphosphate biosynthesis; 5-phospho-alpha-D-ribose 1-diphosphate from D-ribose 5-phosphate (route I): step 1/1. In terms of biological role, involved in the biosynthesis of the central metabolite phospho-alpha-D-ribosyl-1-pyrophosphate (PRPP) via the transfer of pyrophosphoryl group from ATP to 1-hydroxyl of ribose-5-phosphate (Rib-5-P). The protein is Ribose-phosphate pyrophosphokinase of Fusobacterium nucleatum subsp. nucleatum (strain ATCC 25586 / DSM 15643 / BCRC 10681 / CIP 101130 / JCM 8532 / KCTC 2640 / LMG 13131 / VPI 4355).